Here is a 160-residue protein sequence, read N- to C-terminus: MIP18 family protein F45G2.10 (160 aa).

Residues 1-32 are disordered; it reads MGQERLDNANPTLFDSKPRHRPVTGTERDESV.

It belongs to the MIP18 family.

May play a role in chromosome segregation through establishment of sister chromatid cohesion. The chain is MIP18 family protein F45G2.10 from Caenorhabditis elegans.